The sequence spans 293 residues: Ribosomal protein L11 methyltransferase (293 aa).

S-adenosyl-L-methionine is bound by residues threonine 145, glycine 166, aspartate 188, and asparagine 230.

This sequence belongs to the methyltransferase superfamily. PrmA family.

The protein localises to the cytoplasm. The catalysed reaction is L-lysyl-[protein] + 3 S-adenosyl-L-methionine = N(6),N(6),N(6)-trimethyl-L-lysyl-[protein] + 3 S-adenosyl-L-homocysteine + 3 H(+). Its function is as follows. Methylates ribosomal protein L11. In Shewanella sp. (strain ANA-3), this protein is Ribosomal protein L11 methyltransferase.